Here is a 658-residue protein sequence, read N- to C-terminus: Trimethylamine N-oxide transport system permease protein TmoV (658 aa).

Helical transmembrane passes span 20-40 (LGLAMIGLAVMMTLLHYAGLL), 103-123 (IGPIPWSAIAAMTAVVGYYLG), 127-147 (MALLAGGTFVWTAMIGQWDIA), 153-173 (VLVVAAPLAFAIGLVLGISAW), 185-205 (VLAVLQTLPFFTYLLPAVIFF), 212-232 (GAVATTVYAIPPMILMTTLGL), 273-293 (VIMLCLAMVVLTAFIGMPGLG), 300-320 (MGSFKIGRSFEIGVTIVLLAV), 349-369 (FLLMAIGAFVGFTLIAQVVPI), 420-440 (FMLSIPTVAFVLFISAAALLV), 447-467 (VLAAAFFGLVALTGWWDRSVI), 469-489 (LYSVLAAVSIALLLGVPIGVV), 517-537 (IPAIMLFGITATSVVMSILIF), 585-605 (AVGFNQAIMFAFFMVIIAAFI), and 627-647 (FVLGICVTLMALTFDMVIMKW). The 180-residue stretch at 147–326 (AMQTMSVLVV…LLAVTLDRMS (180 aa)) folds into the ABC transmembrane type-1 1 domain. Positions 465–644 (SVITLYSVLA…LMALTFDMVI (180 aa)) constitute an ABC transmembrane type-1 2 domain.

It belongs to the binding-protein-dependent transport system permease family. As to quaternary structure, the complex is probably composed of two ATP-binding proteins (TmoW), two transmembrane proteins (TmoV) and a solute-binding protein (TmoX).

It localises to the cell inner membrane. Functionally, part of the ABC transporter complex TmoXWV involved in trimethylamine N-oxide (TMAO) import. Responsible for the translocation of the substrate across the membrane. Is specific for TMAO and essential for TMAO metabolism. The polypeptide is Trimethylamine N-oxide transport system permease protein TmoV (Ruegeria pomeroyi (strain ATCC 700808 / DSM 15171 / DSS-3) (Silicibacter pomeroyi)).